Reading from the N-terminus, the 479-residue chain is Neuronal acetylcholine receptor subunit alpha-9 (479 aa).

Positions 1 to 25 (MNRPHSCLSFCWMYFAASGIRAVET) are cleaved as a signal peptide. The Extracellular segment spans residues 26–237 (ANGKYAQKLF…TFTLLLKRRS (212 aa)). A glycan (N-linked (GlcNAc...) asparagine) is linked at Asn-57. A disulfide bridge links Cys-155 with Cys-169. Asn-170 is a glycosylation site (N-linked (GlcNAc...) asparagine). Na(+) contacts are provided by Ser-191 and Asp-193. A disulfide bridge links Cys-219 with Cys-220. 3 helical membrane-spanning segments follow: residues 238 to 262 (SFYIVNLLIPCVLISFLAPLSFYLP), 269 to 287 (VSLGVTILLAMTVFQLMVA), and 302 to 323 (YYIATMALITASTALTIMVMNI). The Cytoplasmic segment spans residues 324–457 (HFCGAEARPV…WKKVAKVIDR (134 aa)). Residues 458-476 (FFMWIFFAMVFVMTVLIIA) form a helical membrane-spanning segment.

The protein belongs to the ligand-gated ion channel (TC 1.A.9) family. Acetylcholine receptor (TC 1.A.9.1) subfamily. Alpha-9/CHRNA9 sub-subfamily. In terms of assembly, forms homo- or heterooligomeric channels in conjunction with CHRNA10. The native outer hair cell receptor may be composed of CHRNA9:CHRNA10 heterooligomers. Found in the stoichiometric form (CHRNA9)2:(CHRNA10)3. As to expression, detected in the nasal epithelium, in the outer hair cells of the cochlea, in the pars tuberalis of the hypophysis, and in the developing muscle of the tongue. Also expressed in the neurons of dorsal root ganglia.

The protein resides in the synaptic cell membrane. Its subcellular location is the cell membrane. It catalyses the reaction Ca(2+)(in) = Ca(2+)(out). It carries out the reaction Mg(2+)(in) = Mg(2+)(out). The catalysed reaction is K(+)(in) = K(+)(out). The enzyme catalyses Na(+)(in) = Na(+)(out). Activated by a myriad of ligands such as acetylcholine. AChR activity is inhibited by the antagonist alpha-conotoxins RgIA and GeXXA, small disulfide-constrained peptides from cone snails. In terms of biological role, component of neuronal acetylcholine receptors (nAChRs) that function as pentameric, ligand-gated cation channels with high calcium permeability among other activities. nAChRs are excitatory neurotrasnmitter receptors formed by a collection of nAChR subunits known to mediate synaptic transmission in the nervous system and the neuromuscular junction. Each nAchR subunit confers differential attributes to channel properties, including activation, deactivation and desensitization kinetics, pH sensitivity, cation permeability, and binding to allosteric modulators. Forms either homopentamers or heteropentamers with CHRNA10. Expressed in the inner ear, in sympathetic neurons and in other non-neuronal cells, such as skin keratinocytes and lymphocytes. nAChR formed by CHRNA9:CHRNA10 mediate central nervous system control of auditory and vestibular sensory processing. The channel is permeable to a range of divalent cations including calcium, the influx of which may activate a potassium current which hyperpolarizes the cell membrane. In the ear, mediates synaptic transmission between efferent olivocochlear fibers and hair cells of the cochlea, this may lead to a reduction in basilar membrane motion, altering the activity of auditory nerve fibers and reducing the range of dynamic hearing. This may protect against acoustic trauma. May also regulate keratinocyte adhesion. This chain is Neuronal acetylcholine receptor subunit alpha-9 (Chrna9), found in Rattus norvegicus (Rat).